Reading from the N-terminus, the 427-residue chain is Adenylosuccinate synthetase (427 aa).

Residues 12–18 and 40–42 contribute to the GTP site; these read GDEGKGK and GHT. The active-site Proton acceptor is Asp13. Residues Asp13 and Gly40 each coordinate Mg(2+). IMP contacts are provided by residues 13–16, 38–41, Thr128, Arg142, Gln223, Thr238, and Arg302; these read DEGK and NAGH. His41 (proton donor) is an active-site residue. 298–304 is a binding site for substrate; that stretch reads VTTGRAR. Residues Arg304, 330–332, and 412–414 contribute to the GTP site; these read KLD and GVG.

The protein belongs to the adenylosuccinate synthetase family. Homodimer. The cofactor is Mg(2+).

It localises to the cytoplasm. The enzyme catalyses IMP + L-aspartate + GTP = N(6)-(1,2-dicarboxyethyl)-AMP + GDP + phosphate + 2 H(+). It functions in the pathway purine metabolism; AMP biosynthesis via de novo pathway; AMP from IMP: step 1/2. Functionally, plays an important role in the de novo pathway of purine nucleotide biosynthesis. Catalyzes the first committed step in the biosynthesis of AMP from IMP. The sequence is that of Adenylosuccinate synthetase from Frankia alni (strain DSM 45986 / CECT 9034 / ACN14a).